Reading from the N-terminus, the 608-residue chain is Granule-bound starch synthase 1, chloroplastic/amyloplastic (608 aa).

The transit peptide at 1–76 directs the protein to the chloroplast; sequence MATITASHFV…EGGMAAGTIV (76 aa). Position 96 (Lys-96) interacts with ADP-alpha-D-glucose.

Belongs to the glycosyltransferase 1 family. Bacterial/plant glycogen synthase subfamily.

It is found in the plastid. The protein resides in the chloroplast. Its subcellular location is the amyloplast. The enzyme catalyses an NDP-alpha-D-glucose + [(1-&gt;4)-alpha-D-glucosyl](n) = [(1-&gt;4)-alpha-D-glucosyl](n+1) + a ribonucleoside 5'-diphosphate + H(+). Its pathway is glycan biosynthesis; starch biosynthesis. In terms of biological role, required for the synthesis of amylose. This chain is Granule-bound starch synthase 1, chloroplastic/amyloplastic (WAXY), found in Ipomoea batatas (Sweet potato).